The sequence spans 207 residues: Small ribosomal subunit protein uS4 (207 aa).

Residues 33 to 54 (KLDSKPGQHGRTSGARTSDYGN) form a disordered region. Polar residues predominate over residues 42-53 (GRTSGARTSDYG). One can recognise an S4 RNA-binding domain in the interval 97–160 (SRLDNVVYRM…KKQVRIAEAL (64 aa)).

This sequence belongs to the universal ribosomal protein uS4 family. As to quaternary structure, part of the 30S ribosomal subunit. Contacts protein S5. The interaction surface between S4 and S5 is involved in control of translational fidelity.

Its function is as follows. One of the primary rRNA binding proteins, it binds directly to 16S rRNA where it nucleates assembly of the body of the 30S subunit. In terms of biological role, with S5 and S12 plays an important role in translational accuracy. The chain is Small ribosomal subunit protein uS4 from Cupriavidus necator (strain ATCC 17699 / DSM 428 / KCTC 22496 / NCIMB 10442 / H16 / Stanier 337) (Ralstonia eutropha).